Consider the following 100-residue polypeptide: Probable antitoxin MazE4 (100 aa).

The segment at 77–100 (PYESEAERSAARARRNARQQRSAQ) is disordered.

As to quaternary structure, forms a complex with cognate toxin MazF4.

In terms of biological role, antitoxin component of a type II toxin-antitoxin (TA) system. Labile antitoxin that binds to cognate MazF4 toxin and counteracts its endoribonuclease activity. The protein is Probable antitoxin MazE4 (mazE4) of Mycobacterium tuberculosis (strain CDC 1551 / Oshkosh).